The primary structure comprises 498 residues: Elastase (498 aa).

Positions 1-23 (MKKVSTLDLLFVAIMGVSPAAFA) are cleaved as a signal peptide. The propeptide occupies 24–197 (ADLIDVSKLP…VLDQWEGLAH (174 aa)). C227 and C255 are disulfide-bonded. Residue D333 participates in Ca(2+) binding. Position 337 (H337) interacts with Zn(2+). E338 is an active-site residue. Positions 341 and 361 each coordinate Zn(2+). 4 residues coordinate Ca(2+): E369, E372, D380, and L382. H420 functions as the Proton donor in the catalytic mechanism. A disulfide bridge connects residues C467 and C494.

The protein belongs to the peptidase M4 family. As to quaternary structure, monomer. The cofactor is Ca(2+). It depends on Zn(2+) as a cofactor. Post-translationally, made as a membrane-associated pre-pro-protein, which is exported to the periplasm (yielding pro-elastase) with removal of the signal peptide. Under certain conditions pro-elastase can accumulate. The pro-peptide is removed in the periplasm yielding a (mature length) 33 kDa protein, probably by autocatalysis. The pro-peptide probably remains associated with elastase and can be secreted. Further alterations (perhaps processing) seems to be required before secretion into the extracellular space.

It is found in the secreted. It carries out the reaction Hydrolysis of proteins including elastin, collagen types III and IV, fibronectin and immunoglobulin A, generally with bulky hydrophobic group at P1'. Insulin B chain cleavage pattern identical to that of thermolysin, but specificity differs in other respects.. Its activity is regulated as follows. Inhibited by phosphoramidon. Its function is as follows. Cleaves host elastin, collagen, IgG, and several complement components as well as endogenous pro-aminopeptidase. Autocatalyses processing of its pro-peptide. Processes the pro-peptide of pro-chitin-binding protein (cbpD). Involved in the pathogenesis of P.aeruginosa infections. This is Elastase (lasB) from Pseudomonas aeruginosa (strain ATCC 15692 / DSM 22644 / CIP 104116 / JCM 14847 / LMG 12228 / 1C / PRS 101 / PAO1).